We begin with the raw amino-acid sequence, 302 residues long: MNVSVVTERRTPAYSSLAAGELNGLVARALLTEARLTPKPGLVDIRNSGAHRDMDLAAFERSTTAIAPWMEKFFIMGNNTAALAAENVLVMLRPLGMACENDMLQATNGVNTHRGAIFAFGLLSAAIGRLIARGEPLEQNRICDQVARLSRNIVAHELSAKKAGKLTKSETHFQCYGLSGARGEAESGFRTVRTQALPVFNRVVQEHDDTHLALLQTLLHLMAWNDDTNLVSRGGLEGLYYVQQQAQKLLWQGGVLVEGGIEAMQSLDDELILRNLSPGGSADLLAVTWFLSHFPAGSLYPE.

Belongs to the CitG/MdcB family.

It carries out the reaction 3'-dephospho-CoA + ATP = 2'-(5''-triphospho-alpha-D-ribosyl)-3'-dephospho-CoA + adenine. In Salmonella gallinarum (strain 287/91 / NCTC 13346), this protein is Probable 2-(5''-triphosphoribosyl)-3'-dephosphocoenzyme-A synthase.